The sequence spans 498 residues: Galactose-1-phosphate uridylyltransferase (498 aa).

Belongs to the galactose-1-phosphate uridylyltransferase type 2 family.

It is found in the cytoplasm. The catalysed reaction is alpha-D-galactose 1-phosphate + UDP-alpha-D-glucose = alpha-D-glucose 1-phosphate + UDP-alpha-D-galactose. Its pathway is carbohydrate metabolism; galactose metabolism. In Latilactobacillus sakei subsp. sakei (strain 23K) (Lactobacillus sakei subsp. sakei), this protein is Galactose-1-phosphate uridylyltransferase.